Consider the following 247-residue polypeptide: Carboxy-S-adenosyl-L-methionine synthase (247 aa).

S-adenosyl-L-methionine-binding positions include tyrosine 40, 65–67, 90–91, 122–123, asparagine 137, and arginine 204; these read GAS, DN, and DI.

The protein belongs to the class I-like SAM-binding methyltransferase superfamily. Cx-SAM synthase family. As to quaternary structure, homodimer.

The catalysed reaction is prephenate + S-adenosyl-L-methionine = carboxy-S-adenosyl-L-methionine + 3-phenylpyruvate + H2O. In terms of biological role, catalyzes the conversion of S-adenosyl-L-methionine (SAM) to carboxy-S-adenosyl-L-methionine (Cx-SAM). The chain is Carboxy-S-adenosyl-L-methionine synthase from Pseudomonas putida (strain W619).